The chain runs to 115 residues: Ribosome-binding factor A (115 aa).

It belongs to the RbfA family. Monomer. Binds 30S ribosomal subunits, but not 50S ribosomal subunits or 70S ribosomes.

The protein localises to the cytoplasm. In terms of biological role, one of several proteins that assist in the late maturation steps of the functional core of the 30S ribosomal subunit. Associates with free 30S ribosomal subunits (but not with 30S subunits that are part of 70S ribosomes or polysomes). Required for efficient processing of 16S rRNA. May interact with the 5'-terminal helix region of 16S rRNA. This chain is Ribosome-binding factor A, found in Streptococcus gordonii (strain Challis / ATCC 35105 / BCRC 15272 / CH1 / DL1 / V288).